The sequence spans 590 residues: MRIHFFAFLIILSLVGCDGWQADVGKLVRKWNNQRTIDGNDIEKCIPDDGEQCTIQAGWNSTQVCEYVKCNDDNCEGGGYVLWTRYVECASSPAVRIILIITGVIYMLVLFIMVSSAADDFFSPSISSIVAHLRISESVAGVTFMAFGNGAPDVFGAIASVLSSPTPKADLALGELFGAGLFVTTMVLAVTIFTRPFKAEVFSSIRDIAFYLVALAFLAFCFVYYDHVEIWMPITFLGVYLIYVCTVILSQILHNRHKKDEEKVDEVKTVDTDSLEDDDDIYVSHGHHVLHAHEVMKMEAEIEAVEPLKTWSFRGVVHDFKEHLKPWPSMDEWDEMNIFQKVIAVLNTIPNFLFKLTIPHSEQPWSKPITLLQCLICPVFLLFCIQVCSISPFPNSPGLWMYGLILSVLLTAAVLFFTELHKEPPFYKSLISYAGFLMSIAWIYLISSEVVNVVTMLGVVSRVSHEVLGLTILAWSNSIGDLIADVSVAKQGYPRMAMAAAIGGQLFNLLIGFGLPFTIAKIQGKSISMIINPTYRLLMLFLAISLIFTLIAMFAQKYFLRRIHSYSLVFIYISFFVFIGLSLDDILVWN.

The N-terminal stretch at 1–19 is a signal peptide; sequence MRIHFFAFLIILSLVGCDG. Transmembrane regions (helical) follow at residues 97 to 117, 139 to 159, 173 to 193, 208 to 228, 230 to 250, 368 to 388, 397 to 417, 440 to 460, 499 to 519, 535 to 555, and 568 to 588; these read IILIITGVIYMLVLFIMVSSA, VAGVTFMAFGNGAPDVFGAIA, LGELFGAGLFVTTMVLAVTIF, IAFYLVALAFLAFCFVYYDHV, IWMPITFLGVYLIYVCTVILS, PITLLQCLICPVFLLFCIQVC, PGLWMYGLILSVLLTAAVLFF, IAWIYLISSEVVNVVTMLGVV, AAAIGGQLFNLLIGFGLPFTI, YRLLMLFLAISLIFTLIAMFA, and LVFIYISFFVFIGLSLDDILV.

It belongs to the Ca(2+):cation antiporter (CaCA) (TC 2.A.19) family.

It is found in the membrane. The sequence is that of Putative sodium/calcium exchanger 6 (ncx-6) from Caenorhabditis elegans.